We begin with the raw amino-acid sequence, 322 residues long: Ribosomal RNA small subunit methyltransferase H (322 aa).

Residues 47 to 49, aspartate 67, phenylalanine 93, aspartate 112, and glutamine 119 each bind S-adenosyl-L-methionine; that span reads GGH.

This sequence belongs to the methyltransferase superfamily. RsmH family.

Its subcellular location is the cytoplasm. It catalyses the reaction cytidine(1402) in 16S rRNA + S-adenosyl-L-methionine = N(4)-methylcytidine(1402) in 16S rRNA + S-adenosyl-L-homocysteine + H(+). Its function is as follows. Specifically methylates the N4 position of cytidine in position 1402 (C1402) of 16S rRNA. The chain is Ribosomal RNA small subunit methyltransferase H from Stenotrophomonas maltophilia (strain R551-3).